The sequence spans 609 residues: Manganese lipoxygenase (609 aa).

The N-terminal stretch at 1-16 (MRLLLSIAGLTTVVNA) is a signal peptide. 4 N-linked (GlcNAc...) asparagine glycosylation sites follow: N24, N115, N156, and N193. The Lipoxygenase domain occupies 117–609 (SLKAIQDHGG…PGVIPFYLSV (493 aa)). 2 residues coordinate Mn(2+): H289 and H294. N385 carries N-linked (GlcNAc...) asparagine glycosylation. The Mn(2+) site is built by H474 and N478. An N-linked (GlcNAc...) asparagine glycan is attached at N539. V609 contributes to the Mn(2+) binding site.

The protein belongs to the lipoxygenase family. Manganese lipoxygenase subfamily. Mn(2+) serves as cofactor. In terms of processing, N- and O-glycosylated.

Its subcellular location is the secreted. It carries out the reaction (9Z,12Z)-octadecadienoate + O2 = (9S)-hydroperoxy-(10E,12Z)-octadecadienoate. The catalysed reaction is (9Z,12Z)-octadecadienoate + O2 = (11S)-hydroperoxy-(9Z,12Z)-octadecadienoate. The enzyme catalyses (9Z,12Z)-octadecadienoate + O2 = (13R)-hydroperoxy-(9Z,11E)-octadecadienoate. It catalyses the reaction (9Z,12Z,15Z)-octadecatrienoate + O2 = (11R)-hydroperoxy-(9Z,12Z,15Z)-octadecatrienoate. Its function is as follows. Lipoxygenase that metabolizes linoleic and alpha-linolenic acids to 9-, 11- and 13-hydroperoxy fatty acids. Oxidizes linoleic acid to mainly 9S- and 13R-HPODE and alpha-linolenic acid to 11R-HPOTrE. This Colletotrichum gloeosporioides (strain Cg-14) (Anthracnose fungus) protein is Manganese lipoxygenase.